An 88-amino-acid chain; its full sequence is Small ribosomal subunit protein bS20 (88 aa).

Residues 1 to 20 (MANIKQQKKRNKTNEKRRLR) are disordered.

It belongs to the bacterial ribosomal protein bS20 family.

In terms of biological role, binds directly to 16S ribosomal RNA. The chain is Small ribosomal subunit protein bS20 from Phytoplasma australiense.